A 205-amino-acid polypeptide reads, in one-letter code: MSKRESSKYKIDRRMGENIWGRPKSPVNRREYGPGQHGQRRKGKLSDFGVQLRAKQKLKGYYGDLREKQFRAIFAEADRRKGDTSENLIGLLESRLDAIVYRAKFVPTVFAARQFVNHGHVTVNGVRVNIGSYRCKAGDVIEVREKSKQLVTVLEAVSLAERDVPDYIEVDHNKMVATFGRVPTLSDVPFPVVMEPHLVVEFYSR.

Residues 1–16 show a composition bias toward basic and acidic residues; sequence MSKRESSKYKIDRRMG. Residues 1–46 form a disordered region; it reads MSKRESSKYKIDRRMGENIWGRPKSPVNRREYGPGQHGQRRKGKLS. The S4 RNA-binding domain maps to 94-157; it reads SRLDAIVYRA…KQLVTVLEAV (64 aa).

This sequence belongs to the universal ribosomal protein uS4 family. As to quaternary structure, part of the 30S ribosomal subunit. Contacts protein S5. The interaction surface between S4 and S5 is involved in control of translational fidelity.

Functionally, one of the primary rRNA binding proteins, it binds directly to 16S rRNA where it nucleates assembly of the body of the 30S subunit. Its function is as follows. With S5 and S12 plays an important role in translational accuracy. The polypeptide is Small ribosomal subunit protein uS4 (Rhizobium etli (strain CIAT 652)).